The primary structure comprises 462 residues: Argininosuccinate lyase (462 aa).

Belongs to the lyase 1 family. Argininosuccinate lyase subfamily.

The protein localises to the cytoplasm. It catalyses the reaction 2-(N(omega)-L-arginino)succinate = fumarate + L-arginine. It participates in amino-acid biosynthesis; L-arginine biosynthesis; L-arginine from L-ornithine and carbamoyl phosphate: step 3/3. The sequence is that of Argininosuccinate lyase from Streptococcus agalactiae serotype III (strain NEM316).